The sequence spans 82 residues: Omega-conotoxin-like TxO6 (82 aa).

Residues 1–22 (MKLTCVVIVAVLFLTAWTLVMA) form the signal peptide. Residues 23–50 (DDSNNGLANLFSKSRDEMEDPEAAKLEK) constitute a propeptide that is removed on maturation. Intrachain disulfides connect cysteine 53–cysteine 71, cysteine 60–cysteine 76, and cysteine 70–cysteine 81.

This sequence belongs to the conotoxin O1 superfamily. As to expression, expressed by the venom duct.

The protein localises to the secreted. Its function is as follows. Omega-conotoxins act at presynaptic membranes, they bind and block voltage-gated calcium channels (Cav). In Conus textile (Cloth-of-gold cone), this protein is Omega-conotoxin-like TxO6.